The primary structure comprises 219 residues: Transmembrane protein 247 (219 aa).

2 stretches are compositionally biased toward basic and acidic residues: residues 1–10 (MAAEDREMME) and 29–45 (SKSE…ESQK). Residues 1 to 101 (MAAEDREMME…LPPTPGTERN (101 aa)) are disordered. Residues 121 to 156 (LHEKNQRQRQHEVVMEQLQRERQHEVVMEQLQQEAA) are a coiled coil. 2 helical membrane passes run 167 to 187 (FLLP…IHII) and 194 to 214 (VFFL…LCLI).

The protein localises to the membrane. This is Transmembrane protein 247 (TMEM247) from Homo sapiens (Human).